The primary structure comprises 244 residues: MSINQYSSDFHYHSLMWQQQQQQQQHQNDVVEEKEALFEKPLTPSDVGKLNRLVIPKQHAERYFPLAAAAADAVEKGLLLCFEDEEGKPWRFRYSYWNSSQSYVLTKGWSRYVKEKHLDAGDVVLFHRHRSDGGRFFIGWRRRGDSSSSSDSYRHVQSNASLQYYPHAGAQAVESQRGNSKTLRLFGVNMECQLDSDWSEPSTPDGSNTYTTNHDQFHFYPQQQHYPPPYYMDISFTGDMNRTS.

A DNA-binding region (TF-B3) is located at residues 38-144; that stretch reads FEKPLTPSDV…RFFIGWRRRG (107 aa).

Its subcellular location is the nucleus. This chain is B3 domain-containing protein At2g36080 (ARF31), found in Arabidopsis thaliana (Mouse-ear cress).